Here is a 761-residue protein sequence, read N- to C-terminus: Signal transducer and transcription activator (761 aa).

The SH2 domain occupies 594–658; sequence WKAGCIMGFI…APWTARDFQV (65 aa). Residue Tyr-711 is modified to Phosphotyrosine; by JAK.

The protein belongs to the transcription factor STAT family. In terms of assembly, forms a homodimer or a heterodimer with a related family member. In terms of processing, tyrosine phosphorylated by hopscotch. Phosphorylation is required for DNA-binding activity and dimerization.

It is found in the cytoplasm. It localises to the nucleus. Might play a role in signal transduction and activation of transcription. Plays an important role in the segmental pattern formation in the early embryo by activating specific stripes of pair rule gene expression in early development as part of the Janus kinase-STAT pathway. Might play a role in male germline stem cell maintenance. This Drosophila melanogaster (Fruit fly) protein is Signal transducer and transcription activator (Stat92E).